The chain runs to 568 residues: Tyrosine-protein kinase transforming protein Src (568 aa).

The segment at 1-58 is disordered; the sequence is MGSSKSKPKDPSQRRRSLEPPDSTHHGGFPASQTPNKTAAPDTHRTPSRSFGTVATEP. Gly-2 carries the N-myristoyl glycine; by host lipid modification. Residues 7-25 show a composition bias toward basic and acidic residues; it reads KPKDPSQRRRSLEPPDSTH. The SH3 domain occupies 81-142; it reads GGVTTFVALY…PSNYVAPSDS (62 aa). One can recognise an SH2 domain in the interval 148-245; the sequence is WYFGKITRRE…GLCHRLTNVC (98 aa). The Protein kinase domain maps to 267 to 520; that stretch reads LRLEVKLGQG…YLQAFLEDYF (254 aa). ATP-binding positions include 273–281 and Lys-295; that span reads LGQGCFGEV. Asp-386 acts as the Proton acceptor in catalysis. Tyr-416 bears the Phosphotyrosine; by autocatalysis mark.

This sequence belongs to the protein kinase superfamily. Tyr protein kinase family. SRC subfamily. Post-translationally, the phosphorylated form is termed pp60v-src.

It carries out the reaction L-tyrosyl-[protein] + ATP = O-phospho-L-tyrosyl-[protein] + ADP + H(+). Its function is as follows. This phosphoprotein, required for both the initiation and the maintenance of neoplastic transformation, is a protein kinase that catalyzes the phosphorylation of tyrosine residues in vitro. The chain is Tyrosine-protein kinase transforming protein Src (V-SRC) from Galliformes.